We begin with the raw amino-acid sequence, 185 residues long: Putative tyrosine-protein phosphatase OCA1 (185 aa).

Residues 18-178 (NFCPVEKQLY…TVEIGSGKGS (161 aa)) enclose the Tyrosine-protein phosphatase domain. The active-site Phosphocysteine intermediate is the cysteine 116.

It belongs to the protein-tyrosine phosphatase family.

It is found in the cytoplasm. The catalysed reaction is O-phospho-L-tyrosyl-[protein] + H2O = L-tyrosyl-[protein] + phosphate. Putative tyrosine-protein phosphatase required for protection against superoxide stress. This chain is Putative tyrosine-protein phosphatase OCA1 (OCA1), found in Meyerozyma guilliermondii (strain ATCC 6260 / CBS 566 / DSM 6381 / JCM 1539 / NBRC 10279 / NRRL Y-324) (Yeast).